A 451-amino-acid polypeptide reads, in one-letter code: Bifunctional protein GlmU (451 aa).

The tract at residues 1-226 (MVAVAILAAG…YLEISGINDR (226 aa)) is pyrophosphorylase. Residues 7 to 10 (LAAG), Lys-21, Gln-73, and 78 to 79 (GT) each bind UDP-N-acetyl-alpha-D-glucosamine. Asp-103 contributes to the Mg(2+) binding site. Residues Gly-140, Glu-155, Asn-170, and Asn-224 each contribute to the UDP-N-acetyl-alpha-D-glucosamine site. Asn-224 contacts Mg(2+). Residues 227 to 247 (KQLATAYDILQNRIKDYWMRA) form a linker region. The tract at residues 248-451 (GVTLIDPDSI…ISGWRMKTDD (204 aa)) is N-acetyltransferase. UDP-N-acetyl-alpha-D-glucosamine is bound by residues Arg-329 and Lys-347. Residue His-359 is the Proton acceptor of the active site. UDP-N-acetyl-alpha-D-glucosamine is bound by residues Tyr-362 and Asn-373. Residues Ala-376, 382–383 (NY), Ala-419, and Arg-436 contribute to the acetyl-CoA site.

In the N-terminal section; belongs to the N-acetylglucosamine-1-phosphate uridyltransferase family. The protein in the C-terminal section; belongs to the transferase hexapeptide repeat family. As to quaternary structure, homotrimer. Mg(2+) is required as a cofactor.

The protein resides in the cytoplasm. The catalysed reaction is alpha-D-glucosamine 1-phosphate + acetyl-CoA = N-acetyl-alpha-D-glucosamine 1-phosphate + CoA + H(+). It carries out the reaction N-acetyl-alpha-D-glucosamine 1-phosphate + UTP + H(+) = UDP-N-acetyl-alpha-D-glucosamine + diphosphate. It participates in nucleotide-sugar biosynthesis; UDP-N-acetyl-alpha-D-glucosamine biosynthesis; N-acetyl-alpha-D-glucosamine 1-phosphate from alpha-D-glucosamine 6-phosphate (route II): step 2/2. Its pathway is nucleotide-sugar biosynthesis; UDP-N-acetyl-alpha-D-glucosamine biosynthesis; UDP-N-acetyl-alpha-D-glucosamine from N-acetyl-alpha-D-glucosamine 1-phosphate: step 1/1. The protein operates within bacterial outer membrane biogenesis; LPS lipid A biosynthesis. Catalyzes the last two sequential reactions in the de novo biosynthetic pathway for UDP-N-acetylglucosamine (UDP-GlcNAc). The C-terminal domain catalyzes the transfer of acetyl group from acetyl coenzyme A to glucosamine-1-phosphate (GlcN-1-P) to produce N-acetylglucosamine-1-phosphate (GlcNAc-1-P), which is converted into UDP-GlcNAc by the transfer of uridine 5-monophosphate (from uridine 5-triphosphate), a reaction catalyzed by the N-terminal domain. The sequence is that of Bifunctional protein GlmU from Gloeothece citriformis (strain PCC 7424) (Cyanothece sp. (strain PCC 7424)).